The following is an 83-amino-acid chain: Apolipoprotein C-I, acidic form (83 aa).

The first 26 residues, Met-1–Gly-26, serve as a signal peptide directing secretion.

This sequence belongs to the apolipoprotein C1 family.

It localises to the secreted. This is Apolipoprotein C-I, acidic form (APOC1A) from Gorilla gorilla gorilla (Western lowland gorilla).